The sequence spans 123 residues: Large ribosomal subunit protein uL14 (123 aa).

This sequence belongs to the universal ribosomal protein uL14 family. Part of the 50S ribosomal subunit. Forms a cluster with proteins L3 and L19. In the 70S ribosome, L14 and L19 interact and together make contacts with the 16S rRNA in bridges B5 and B8.

In terms of biological role, binds to 23S rRNA. Forms part of two intersubunit bridges in the 70S ribosome. The polypeptide is Large ribosomal subunit protein uL14 (Photobacterium profundum (strain SS9)).